A 235-amino-acid chain; its full sequence is Segregation and condensation protein A (235 aa).

This sequence belongs to the ScpA family. As to quaternary structure, component of a cohesin-like complex composed of ScpA, ScpB and the Smc homodimer, in which ScpA and ScpB bind to the head domain of Smc. The presence of the three proteins is required for the association of the complex with DNA.

The protein localises to the cytoplasm. Participates in chromosomal partition during cell division. May act via the formation of a condensin-like complex containing Smc and ScpB that pull DNA away from mid-cell into both cell halves. This chain is Segregation and condensation protein A, found in Streptococcus agalactiae serotype III (strain NEM316).